Here is a 589-residue protein sequence, read N- to C-terminus: Cell fusion protein aff-1 (589 aa).

Residues 1–20 (MRLWQWSIAVAICLVMVTEA) form the signal peptide. At 21 to 537 (RLRRHHRKRR…MAHGGDFTEW (517 aa)) the chain is on the extracellular side. Residues Asn58, Asn138, Asn205, Asn335, Asn382, Asn392, and Asn408 are each glycosylated (N-linked (GlcNAc...) asparagine). The helical transmembrane segment at 538 to 558 (LKIGIHIVIAVGLLLLLILLF) threads the bilayer. Topologically, residues 559 to 589 (TKCLVPLACCSLSIPFKNRNKKKKKKNSSDY) are cytoplasmic.

This sequence belongs to the EFF/AFF cell fusogen family. Expressed in amphid sheath cells.

The protein localises to the cell membrane. Its subcellular location is the apical cell membrane. Functionally, required for cell fusion events during development including the fusion of anchor cells (AC), vulval A and vulval D rings, and late epidermal seam cells. Required for amphid sheath cell fusion induced by entry into dauer stage. This is Cell fusion protein aff-1 from Caenorhabditis elegans.